Here is a 156-residue protein sequence, read N- to C-terminus: Transcription elongation factor GreA (156 aa).

Positions 1 to 32 (MKKVRLTREGYEKLKKELEDLKRKFMYEISER) form a coiled coil.

The protein belongs to the GreA/GreB family.

Necessary for efficient RNA polymerase transcription elongation past template-encoded arresting sites. The arresting sites in DNA have the property of trapping a certain fraction of elongating RNA polymerases that pass through, resulting in locked ternary complexes. Cleavage of the nascent transcript by cleavage factors such as GreA or GreB allows the resumption of elongation from the new 3'terminus. GreA releases sequences of 2 to 3 nucleotides. This is Transcription elongation factor GreA from Thermotoga petrophila (strain ATCC BAA-488 / DSM 13995 / JCM 10881 / RKU-1).